We begin with the raw amino-acid sequence, 334 residues long: Phosphate acyltransferase (334 aa).

It belongs to the PlsX family. In terms of assembly, homodimer. Probably interacts with PlsY.

The protein resides in the cytoplasm. The catalysed reaction is a fatty acyl-[ACP] + phosphate = an acyl phosphate + holo-[ACP]. It participates in lipid metabolism; phospholipid metabolism. Its function is as follows. Catalyzes the reversible formation of acyl-phosphate (acyl-PO(4)) from acyl-[acyl-carrier-protein] (acyl-ACP). This enzyme utilizes acyl-ACP as fatty acyl donor, but not acyl-CoA. This chain is Phosphate acyltransferase, found in Caldicellulosiruptor bescii (strain ATCC BAA-1888 / DSM 6725 / KCTC 15123 / Z-1320) (Anaerocellum thermophilum).